The sequence spans 507 residues: Serine hydroxymethyltransferase (507 aa).

Lysine 283 carries the N6-(pyridoxal phosphate)lysine modification.

This sequence belongs to the SHMT family. In terms of assembly, homotetramer. It depends on pyridoxal 5'-phosphate as a cofactor.

The enzyme catalyses (6R)-5,10-methylene-5,6,7,8-tetrahydrofolate + glycine + H2O = (6S)-5,6,7,8-tetrahydrofolate + L-serine. Its pathway is one-carbon metabolism; tetrahydrofolate interconversion. In terms of biological role, interconversion of serine and glycine. The protein is Serine hydroxymethyltransferase (mel-32) of Caenorhabditis elegans.